Reading from the N-terminus, the 182-residue chain is Ribosome-recycling factor (182 aa).

Belongs to the RRF family.

It is found in the cytoplasm. In terms of biological role, responsible for the release of ribosomes from messenger RNA at the termination of protein biosynthesis. May increase the efficiency of translation by recycling ribosomes from one round of translation to another. This is Ribosome-recycling factor from Gloeobacter violaceus (strain ATCC 29082 / PCC 7421).